Consider the following 238-residue polypeptide: Phosphoglycolate phosphatase (238 aa).

D8 serves as the catalytic Nucleophile. D8 and D10 together coordinate Mg(2+). K163 contacts substrate. Residues D186 and D190 each coordinate Mg(2+).

Belongs to the archaeal SPP-like hydrolase family. The cofactor is Mg(2+).

The catalysed reaction is 2-phosphoglycolate + H2O = glycolate + phosphate. Its function is as follows. Catalyzes the dephosphorylation of 2-phosphoglycolate. The polypeptide is Phosphoglycolate phosphatase (Staphylothermus marinus (strain ATCC 43588 / DSM 3639 / JCM 9404 / F1)).